Consider the following 340-residue polypeptide: MTDHALLLVNLGSPASTSVADVRSYLNQFLMDPYVIDLPWPVRRLLVSLILIKRPAQSAHAYASIWWDEGSPLVVLSRRLQQQMTAQWTQGPVELAMRYGEPSIESVLTRLAGQGISKVTLAPLYPQFADSTVTTVIEEARRVVRDKQLDLQFSILQPFYDQPEYLDALVASARPHLQQDYDHLLFSFHGLPERHLNKLNPGHSLEGSGDCCANASPEVRTTCYRGQCFSVARDFAARMGLPDDKWSVAFQSRLGRAKWIEPYTEARLEALAQQGVKKLLVMCPAFVADCIETLEEIGDRGLEQFREAGGEELVLVPCLNDDPQWAVALNTLCERAPVSL.

Fe cation contacts are provided by histidine 189 and glutamate 292.

This sequence belongs to the ferrochelatase family.

It is found in the cytoplasm. The catalysed reaction is heme b + 2 H(+) = protoporphyrin IX + Fe(2+). Its pathway is porphyrin-containing compound metabolism; protoheme biosynthesis; protoheme from protoporphyrin-IX: step 1/1. Functionally, catalyzes the ferrous insertion into protoporphyrin IX. The polypeptide is Ferrochelatase (Pseudomonas fluorescens biotype C).